The primary structure comprises 325 residues: MSLKGDRLKDEGSRLQVTAAGATAGLVARFVIAPLDVVKIRLQLQTHSLSDPLSHRDLHGGPIYKGTLPTLRHILRSEGITGLWKGNVPAELLYVCYSAIQFTTYRTTTLLLHQTLGEGTLPPSAESFVAGAIGGGTATAATYPLDPAAHALRRPGQRSRVCESVARRGPDWVVRRAPVGFFGVWDRAWAQIIPYMSFFFATYETLRPHLSELELPFSSSSAVARTMASVMAKSRTFPLDLVRKRIQVQSPTRGRYVHKNIPEYYGGTVGALRTILQREGLRGLYRGLTVSLLKAAPASAVTMWTYERALKFYSGVGEKGEEQRL.

Solcar repeat units follow at residues 12-111 (GSRL…TTLL), 122-209 (PPSA…LRPH), and 216-312 (PFSS…ALKF). Helical transmembrane passes span 17-35 (VTAA…IAPL), 92-108 (LLYV…YRTT), 127-143 (SFVA…AATY), 184-200 (VWDR…SFFF), 223-239 (VART…TFPL), and 287-304 (GLTV…VTMW).

It belongs to the mitochondrial carrier (TC 2.A.29) family.

It is found in the mitochondrion inner membrane. In terms of biological role, mitochondrial transporter that mediates uptake of thiamine pyrophosphate (ThPP) into mitochondria. This is Mitochondrial thiamine pyrophosphate carrier 1 (TPC1) from Chaetomium globosum (strain ATCC 6205 / CBS 148.51 / DSM 1962 / NBRC 6347 / NRRL 1970) (Soil fungus).